A 200-amino-acid polypeptide reads, in one-letter code: MKKKAIFGGTFDPIHNGHLHIAYKALNRLKLDKIIFIPSGNPPHKHKECITDKNIRYNMVKYAIEQEDKFEISDYEVKKKGKSYTYETIEHFRKYHPNIDLYFIAGADCLMDIHKWKNIDSMMEKAKLVVFSRPGFSMDTILFQKKQVEEKFKKDIIFLDIPLLDVSSTEIREKIKKGEDIKDLIPEKTYNIIKKYGLYR.

This sequence belongs to the NadD family.

It carries out the reaction nicotinate beta-D-ribonucleotide + ATP + H(+) = deamido-NAD(+) + diphosphate. The protein operates within cofactor biosynthesis; NAD(+) biosynthesis; deamido-NAD(+) from nicotinate D-ribonucleotide: step 1/1. Functionally, catalyzes the reversible adenylation of nicotinate mononucleotide (NaMN) to nicotinic acid adenine dinucleotide (NaAD). The protein is Probable nicotinate-nucleotide adenylyltransferase of Clostridium tetani (strain Massachusetts / E88).